A 389-amino-acid chain; its full sequence is Major outer membrane porin (389 aa).

The signal sequence occupies residues 1 to 23 (MKKLLKSALLSAAFAGSVGSLQA).

This sequence belongs to the chlamydial porin (CP) (TC 1.B.2) family. Part of a disulfide cross-linked outer membrane complex (COMC) composed of the major outer membrane porin (MOMP), the small cysteine-rich protein (OmcA) and the large cysteine-rich periplasmic protein (OmcB).

It localises to the cell outer membrane. Its function is as follows. In elementary bodies (EBs, the infectious stage, which is able to survive outside the host cell) provides the structural integrity of the outer envelope through disulfide cross-links with the small cysteine-rich protein and the large cysteine-rich periplasmic protein. It has been described in publications as the Sarkosyl-insoluble COMC (Chlamydia outer membrane complex), and serves as the functional equivalent of peptidoglycan. Permits diffusion of specific solutes through the outer membrane. The polypeptide is Major outer membrane porin (ompA) (Chlamydia pneumoniae (Chlamydophila pneumoniae)).